The primary structure comprises 214 residues: Pyridoxine/pyridoxamine 5'-phosphate oxidase (214 aa).

Substrate is bound by residues 11-14 (RREY) and K68. FMN is bound by residues 63 to 68 (RLVLLK), 78 to 79 (FT), R84, K85, and Q107. The substrate site is built by Y125 and R129. FMN-binding positions include 142–143 (QS) and W187. 193 to 195 (RLH) serves as a coordination point for substrate. Position 197 (R197) interacts with FMN.

It belongs to the pyridoxamine 5'-phosphate oxidase family. As to quaternary structure, homodimer. Requires FMN as cofactor.

It catalyses the reaction pyridoxamine 5'-phosphate + O2 + H2O = pyridoxal 5'-phosphate + H2O2 + NH4(+). It carries out the reaction pyridoxine 5'-phosphate + O2 = pyridoxal 5'-phosphate + H2O2. It functions in the pathway cofactor metabolism; pyridoxal 5'-phosphate salvage; pyridoxal 5'-phosphate from pyridoxamine 5'-phosphate: step 1/1. It participates in cofactor metabolism; pyridoxal 5'-phosphate salvage; pyridoxal 5'-phosphate from pyridoxine 5'-phosphate: step 1/1. In terms of biological role, catalyzes the oxidation of either pyridoxine 5'-phosphate (PNP) or pyridoxamine 5'-phosphate (PMP) into pyridoxal 5'-phosphate (PLP). The protein is Pyridoxine/pyridoxamine 5'-phosphate oxidase of Blochmanniella floridana.